A 397-amino-acid chain; its full sequence is Digeranylgeranylglycerophospholipid reductase 1 (397 aa).

10 residues coordinate FAD: Ala-18, Asp-37, Cys-48, Ala-49, Gly-51, Arg-104, Ala-128, Asp-284, Gly-296, and Ile-297.

Belongs to the geranylgeranyl reductase family. DGGGPL reductase subfamily. It depends on FAD as a cofactor.

The enzyme catalyses a 2,3-bis-O-phytanyl-sn-glycerol 1-phospholipid + 8 A = a 2,3-bis-O-(geranylgeranyl)-sn-glycerol 1-phospholipid + 8 AH2. The catalysed reaction is 2,3-bis-O-(phytanyl)-sn-glycerol 1-phosphate + 8 A = 2,3-bis-O-(geranylgeranyl)-sn-glycerol 1-phosphate + 8 AH2. It catalyses the reaction CDP-2,3-bis-O-(geranylgeranyl)-sn-glycerol + 8 AH2 = CDP-2,3-bis-O-(phytanyl)-sn-glycerol + 8 A. It carries out the reaction archaetidylserine + 8 AH2 = 2,3-bis-O-phytanyl-sn-glycero-3-phospho-L-serine + 8 A. It functions in the pathway membrane lipid metabolism; glycerophospholipid metabolism. Its function is as follows. Is involved in the reduction of 2,3-digeranylgeranylglycerophospholipids (unsaturated archaeols) into 2,3-diphytanylglycerophospholipids (saturated archaeols) in the biosynthesis of archaeal membrane lipids. Catalyzes the formation of archaetidic acid (2,3-di-O-phytanyl-sn-glyceryl phosphate) from 2,3-di-O-geranylgeranylglyceryl phosphate (DGGGP) via the hydrogenation of each double bond of the isoprenoid chains. Is also probably able to reduce double bonds of geranyl groups in CDP-2,3-bis-O-(geranylgeranyl)-sn-glycerol and archaetidylserine, thus acting at various stages in the biosynthesis of archaeal membrane lipids. The polypeptide is Digeranylgeranylglycerophospholipid reductase 1 (Methanothermobacter thermautotrophicus (strain ATCC 29096 / DSM 1053 / JCM 10044 / NBRC 100330 / Delta H) (Methanobacterium thermoautotrophicum)).